Reading from the N-terminus, the 348-residue chain is Rhodopsin (348 aa).

N-acetylmethionine is present on M1. Over 1–36 (MNGTEGPNFYVPFSNKTGVVRSPFEYPQYYLAEPWQ) the chain is Extracellular. N-linked (GlcNAc...) asparagine glycans are attached at residues N2 and N15. The chain crosses the membrane as a helical span at residues 37–61 (FSMLAAYMFLLIVLGFPINFLTLYV). Residues 62–73 (TVQHKKLRTPLN) lie on the Cytoplasmic side of the membrane. Residues 74–96 (YILLNLAVADLFMVFGGFTTTLY) form a helical membrane-spanning segment. Residues 97 to 110 (TSLHGYFVFGPTGC) lie on the Extracellular side of the membrane. A disulfide bridge links C110 with C187. A helical transmembrane segment spans residues 111 to 133 (NVEGFFATLGGEIALWSLVVLAI). The 'Ionic lock' involved in activated form stabilization signature appears at 134–136 (ERY). The Cytoplasmic segment spans residues 134–152 (ERYVVVCKPMSNFRFGENH). The chain crosses the membrane as a helical span at residues 153 to 173 (AIMGVAFTWVMALACAAPPLA). At 174–202 (GWSRYIPEGMQCSCGIDYYTLKPEVNNES) the chain is on the extracellular side. Residue E201 participates in Zn(2+) binding. The helical transmembrane segment at 203–224 (FVIYMFVVHFTIPMIVIFFCYG) threads the bilayer. Residues 225–252 (QLVFTVKEAAAQQQESATTQKAEKEVTR) lie on the Cytoplasmic side of the membrane. Residues 253 to 274 (MVIIMVIAFLICWVPYASVAFY) traverse the membrane as a helical segment. Topologically, residues 275–286 (IFTHQGSNFGPI) are extracellular. Residue Q279 participates in Zn(2+) binding. The helical transmembrane segment at 287–308 (FMTLPAFFAKSASIYNPVIYIM) threads the bilayer. N6-(retinylidene)lysine is present on K296. The Cytoplasmic segment spans residues 309–348 (MNKQFRNCMLTTICCGKNPFAEEEGATTVSKTETSQVAPA). S-palmitoyl cysteine attachment occurs at residues C322 and C323. Residues 330 to 348 (EEEGATTVSKTETSQVAPA) are interaction with SAG. A phosphothreonine mark is found at T335 and T336. A Phosphoserine modification is found at S338. Phosphothreonine occurs at positions 340 and 342. The residue at position 343 (S343) is a Phosphoserine.

The protein belongs to the G-protein coupled receptor 1 family. Opsin subfamily. In terms of assembly, homodimer. May form a complex composed of RHO, GRK1 and RCVRN in a Ca(2+)-dependent manner; RCVRN prevents the interaction between GRK1 and RHO. Interacts with GRK1. Interacts (phosphorylated form) with SAG. Interacts with GNAT1. Interacts with GNAT3. SAG and G-proteins compete for a common binding site. Interacts with PRCD; the interaction promotes PRCD stability. Forms a complex with ASAP1 and ARF4. Forms a complex with ASAP1, RAB11A, Rabin8/RAB3IP, ARF4 and RAB11FIP3; the complex regulates Golgi-to-cilia rhodopsin/RHO transport in photoreceptors. Phosphorylated on some or all of the serine and threonine residues present in the C-terminal region. Post-translationally, contains one covalently linked retinal chromophore. Upon light absorption, the covalently bound 11-cis-retinal is converted to all-trans-retinal. After hydrolysis of the Schiff base and release of the covalently bound all-trans-retinal, active rhodopsin is regenerated by binding of a fresh molecule of 11-cis-retinal.

It localises to the membrane. The protein localises to the cell projection. It is found in the cilium. The protein resides in the photoreceptor outer segment. Functionally, photoreceptor required for image-forming vision at low light intensity. Required for photoreceptor cell viability after birth. Light-induced isomerization of 11-cis to all-trans retinal triggers a conformational change that activates signaling via G-proteins. Subsequent receptor phosphorylation mediates displacement of the bound G-protein alpha subunit by the arrestin SAG and terminates signaling. In Trichechus manatus (Caribbean manatee), this protein is Rhodopsin (RHO).